A 452-amino-acid chain; its full sequence is Phosphoglucosamine mutase (452 aa).

Serine 98 functions as the Phosphoserine intermediate in the catalytic mechanism. Residues serine 98, aspartate 239, aspartate 241, and aspartate 243 each contribute to the Mg(2+) site. Serine 98 carries the phosphoserine modification.

It belongs to the phosphohexose mutase family. The cofactor is Mg(2+). Activated by phosphorylation.

It catalyses the reaction alpha-D-glucosamine 1-phosphate = D-glucosamine 6-phosphate. Functionally, catalyzes the conversion of glucosamine-6-phosphate to glucosamine-1-phosphate. The sequence is that of Phosphoglucosamine mutase from Anaplasma marginale (strain Florida).